Consider the following 353-residue polypeptide: Protein RecA (353 aa).

67–74 (GPESSGKT) is a binding site for ATP.

It belongs to the RecA family.

The protein resides in the cytoplasm. Can catalyze the hydrolysis of ATP in the presence of single-stranded DNA, the ATP-dependent uptake of single-stranded DNA by duplex DNA, and the ATP-dependent hybridization of homologous single-stranded DNAs. It interacts with LexA causing its activation and leading to its autocatalytic cleavage. The protein is Protein RecA of Shewanella loihica (strain ATCC BAA-1088 / PV-4).